The following is a 186-amino-acid chain: UPF0669 protein C6orf120 homolog (186 aa).

An N-terminal signal peptide occupies residues Met1–Gly19. Asn47 is a glycosylation site (N-linked (GlcNAc...) asparagine). Positions Lys141–Glu165 are disordered. The span at Asn142–Pro159 shows a compositional bias: polar residues.

This sequence belongs to the UPF0669 family.

The protein localises to the secreted. In Danio rerio (Zebrafish), this protein is UPF0669 protein C6orf120 homolog.